The following is a 456-amino-acid chain: D-glycerate 3-kinase, chloroplastic (456 aa).

A chloroplast-targeting transit peptide spans 1–63 (MAVAISGSSL…KFNDHVVNPS (63 aa)). 215 to 222 (APQGCGKT) provides a ligand contact to ATP.

The protein belongs to the GLYK kinase family.

Its subcellular location is the plastid. It localises to the chloroplast. It is found in the cytoplasm. It carries out the reaction (R)-glycerate + ATP = (2R)-3-phosphoglycerate + ADP + H(+). It functions in the pathway photosynthesis; photorespiration; 3-phospho-D-glycerate from glycine: step 4/4. In terms of biological role, catalyzes the concluding reaction of the photorespiratory C2 cycle, an indispensable ancillary metabolic pathway to the photosynthetic C3 cycle that enables land plants to grow in an oxygen-containing atmosphere. Its function is as follows. Cytoplasmic D-glycerate 3-kinase that constitutes a photorespiratory bypass that alleviates fluctuating light-induced photoinhibition. This is D-glycerate 3-kinase, chloroplastic from Arabidopsis thaliana (Mouse-ear cress).